The chain runs to 66 residues: Small ribosomal subunit protein eS27 (66 aa).

Zn(2+)-binding residues include Cys21, Cys24, Cys40, and Cys43. The segment at 21–43 (CPNCGNEQTIFSHATFPVRCLSC) adopts a C4-type zinc-finger fold.

The protein belongs to the eukaryotic ribosomal protein eS27 family. In terms of assembly, part of the 30S ribosomal subunit. Requires Zn(2+) as cofactor.

The polypeptide is Small ribosomal subunit protein eS27 (Saccharolobus solfataricus (strain ATCC 35092 / DSM 1617 / JCM 11322 / P2) (Sulfolobus solfataricus)).